Here is a 471-residue protein sequence, read N- to C-terminus: Putative multidrug resistance protein MdtD (471 aa).

The Periplasmic portion of the chain corresponds to 1–12 (MTDLPDSTRWQL). The chain crosses the membrane as a helical span at residues 13 to 33 (WIVAFGFFMQSLDTTIVNTAI). The Cytoplasmic segment spans residues 34–48 (PSMAQSLGESPLHMH). A helical membrane pass occupies residues 49-69 (MVIVSYVLTVAVMLPASGWLA). Residues 70 to 76 (DKVGVRN) lie on the Periplasmic side of the membrane. A helical membrane pass occupies residues 77–97 (IFFTAIVLFTLGSLFCALSGT). Over 98–101 (LNEL) the chain is Cytoplasmic. Residues 102–124 (LLARALQGVGGAMMVPVGRLTVM) traverse the membrane as a helical segment. At 125–137 (KIVPREQYMAAMT) the chain is on the periplasmic side. A helical membrane pass occupies residues 138–158 (FVTLPGQVGPLLGPALGGLLV). The Cytoplasmic segment spans residues 159-164 (EYASWH). Residues 165–185 (WIFLINIPVGIIGAIATLMLM) form a helical membrane-spanning segment. The Periplasmic portion of the chain corresponds to 186–196 (PNYTMQTRRFD). A helical transmembrane segment spans residues 197-217 (LSGFLLLAVGMAVLTLALDGS). At 218–224 (KGTGLSP) the chain is on the cytoplasmic side. A helical membrane pass occupies residues 225–245 (LAIAGLVAVGVVALVLYLLHA). Residues 246-262 (RNNNRALFSLKLFRTRT) lie on the Periplasmic side of the membrane. A helical membrane pass occupies residues 263–283 (FSLGLAGSFAGRIGSGMLPFM). The Cytoplasmic portion of the chain corresponds to 284-285 (TP). A helical transmembrane segment spans residues 286-306 (VFLQIGLGFSPFHAGLMMIPM). The Periplasmic portion of the chain corresponds to 307–341 (VLGSMGMKRIVVQVVNRFGYRRVLVATTLGLSLVT). A helical transmembrane segment spans residues 342–362 (LLFMTTALLGWYYVLPFVLFL). At 363 to 395 (QGMVNSTRFSSMNTLTLKDLPDNLASSGNSLLS) the chain is on the cytoplasmic side. A helical membrane pass occupies residues 396 to 416 (MIMQLSMSIGVTIAGLLLGLF). The Periplasmic segment spans residues 417-430 (GSQHVSVDSGTTQT). Residues 431-451 (VFMYTWLSMAFIIALPAFIFA) traverse the membrane as a helical segment. Topologically, residues 452 to 471 (RVPNDTHQNVAISRRKRSAQ) are cytoplasmic.

This sequence belongs to the major facilitator superfamily. TCR/Tet family.

The protein resides in the cell inner membrane. This Shigella flexneri serotype 5b (strain 8401) protein is Putative multidrug resistance protein MdtD.